Reading from the N-terminus, the 344-residue chain is UDP-3-O-acylglucosamine N-acyltransferase (344 aa).

The Proton acceptor role is filled by H248.

Belongs to the transferase hexapeptide repeat family. LpxD subfamily. In terms of assembly, homotrimer.

It carries out the reaction a UDP-3-O-[(3R)-3-hydroxyacyl]-alpha-D-glucosamine + a (3R)-hydroxyacyl-[ACP] = a UDP-2-N,3-O-bis[(3R)-3-hydroxyacyl]-alpha-D-glucosamine + holo-[ACP] + H(+). The protein operates within bacterial outer membrane biogenesis; LPS lipid A biosynthesis. Functionally, catalyzes the N-acylation of UDP-3-O-acylglucosamine using 3-hydroxyacyl-ACP as the acyl donor. Is involved in the biosynthesis of lipid A, a phosphorylated glycolipid that anchors the lipopolysaccharide to the outer membrane of the cell. This chain is UDP-3-O-acylglucosamine N-acyltransferase, found in Prochlorococcus marinus (strain MIT 9312).